We begin with the raw amino-acid sequence, 297 residues long: Carbamate kinase (297 aa).

This sequence belongs to the carbamate kinase family.

It localises to the cytoplasm. It catalyses the reaction hydrogencarbonate + NH4(+) + ATP = carbamoyl phosphate + ADP + H2O + H(+). The catalysed reaction is carbamate + ATP = carbamoyl phosphate + ADP. The enzyme catalyses hydrogencarbonate + NH4(+) = carbamate + H2O + H(+). It functions in the pathway nitrogen metabolism; (S)-allantoin degradation. In terms of biological role, kinase involved in the anaerobic nitrogen utilization via the assimilation of allantoin. Catalyzes the transfer of a phosphate group from carbamoyl phosphate to ADP to produce ATP and leave carbamate, which spontaneously hydrolyzes to ammonia and hydrogencarbonate. The protein is Carbamate kinase of Escherichia coli O157:H7.